Here is a 124-residue protein sequence, read N- to C-terminus: MTNIYISIFSFLSSYGLDIHIFNRFIPFHLYHKVSISFRGIIIAVSRRGTQAPTDNGKRSGIITAYVKEEDQFKKGKGRGLRIGTLQATKRLIDSSYEALFLSIYCLSSSKQSFVTKKKAACYR.

This is an uncharacterized protein from Saccharomyces cerevisiae (strain ATCC 204508 / S288c) (Baker's yeast).